The primary structure comprises 452 residues: Biotin carboxylase (452 aa).

The region spanning 1-445 (MFKKVLIANR…TTAFVTNHLK (445 aa)) is the Biotin carboxylation domain. ATP contacts are provided by residues Lys-116, Lys-158, 164–165 (GG), 200–203 (EKAV), His-208, and His-235. The 198-residue stretch at 120–317 (RTAMQTAGVP…LVEWQLLIAA (198 aa)) folds into the ATP-grasp domain. Lys-237 provides a ligand contact to hydrogencarbonate. The ATP site is built by Glu-275 and Glu-288. Mg(2+)-binding residues include Glu-275, Glu-288, and Asn-290. Residues Glu-275, Glu-288, and Asn-290 each coordinate Mn(2+). Residues Arg-292, Val-295, and Arg-338 each coordinate hydrogencarbonate. The active site involves Arg-292. Arg-338 contacts biotin.

As to quaternary structure, acetyl-CoA carboxylase is a heterohexamer of biotin carboxyl carrier protein, biotin carboxylase and the two subunits of carboxyl transferase in a 2:2 complex. The cofactor is Mg(2+). It depends on Mn(2+) as a cofactor.

The enzyme catalyses N(6)-biotinyl-L-lysyl-[protein] + hydrogencarbonate + ATP = N(6)-carboxybiotinyl-L-lysyl-[protein] + ADP + phosphate + H(+). Its pathway is lipid metabolism; malonyl-CoA biosynthesis; malonyl-CoA from acetyl-CoA: step 1/1. Functionally, this protein is a component of the acetyl coenzyme A carboxylase complex; first, biotin carboxylase catalyzes the carboxylation of the carrier protein and then the transcarboxylase transfers the carboxyl group to form malonyl-CoA. This chain is Biotin carboxylase (accC), found in Halalkalibacterium halodurans (strain ATCC BAA-125 / DSM 18197 / FERM 7344 / JCM 9153 / C-125) (Bacillus halodurans).